The following is a 162-amino-acid chain: ATP synthase subunit b 1 (162 aa).

The helical transmembrane segment at 3–23 (FLDATFFAFVGLVLFLALVVY) threads the bilayer.

Belongs to the ATPase B chain family. In terms of assembly, F-type ATPases have 2 components, F(1) - the catalytic core - and F(0) - the membrane proton channel. F(1) has five subunits: alpha(3), beta(3), gamma(1), delta(1), epsilon(1). F(0) has three main subunits: a(1), b(2) and c(10-14). The alpha and beta chains form an alternating ring which encloses part of the gamma chain. F(1) is attached to F(0) by a central stalk formed by the gamma and epsilon chains, while a peripheral stalk is formed by the delta and b chains.

It localises to the cell inner membrane. F(1)F(0) ATP synthase produces ATP from ADP in the presence of a proton or sodium gradient. F-type ATPases consist of two structural domains, F(1) containing the extramembraneous catalytic core and F(0) containing the membrane proton channel, linked together by a central stalk and a peripheral stalk. During catalysis, ATP synthesis in the catalytic domain of F(1) is coupled via a rotary mechanism of the central stalk subunits to proton translocation. In terms of biological role, component of the F(0) channel, it forms part of the peripheral stalk, linking F(1) to F(0). The protein is ATP synthase subunit b 1 of Rhizobium johnstonii (strain DSM 114642 / LMG 32736 / 3841) (Rhizobium leguminosarum bv. viciae).